Reading from the N-terminus, the 466-residue chain is uncharacterized protein (466 aa).

The tract at residues 1 to 22 is disordered; the sequence is MKKNNERVNTNPSLISKSYNMK. Polar residues predominate over residues 7 to 19; that stretch reads RVNTNPSLISKSY. Residues S40 and S42 each carry the phosphoserine modification. One can recognise an RRM domain in the interval 108 to 183; sequence YFVHMDNISP…RLISATITNH (76 aa). Residues 186 to 207 are disordered; it reads RLPNAEHLESSTKTKDESQDKD. Positions 188 to 207 are enriched in basic and acidic residues; sequence PNAEHLESSTKTKDESQDKD. Residues 209-368 form the CID domain; that stretch reads LTKLDRAKLE…RAWRNFSGNT (160 aa). Position 371 is a phosphoserine (S371). Over residues 425-436 the composition is skewed to low complexity; the sequence is STETSSSSSPQP. A disordered region spans residues 425 to 448; the sequence is STETSSSSSPQPTEERKAKFKPSF.

Its subcellular location is the nucleus. It is found in the cytoplasm. This is an uncharacterized protein from Schizosaccharomyces pombe (strain 972 / ATCC 24843) (Fission yeast).